The primary structure comprises 394 residues: Phosphoglycerate kinase (394 aa).

Residues 21–23 (DFN), Arg-37, 60–63 (HLGR), Arg-119, and Arg-152 each bind substrate. ATP-binding positions include Lys-202, Gly-293, Glu-324, and 350 to 353 (GGDS).

The protein belongs to the phosphoglycerate kinase family. In terms of assembly, monomer.

It is found in the cytoplasm. The enzyme catalyses (2R)-3-phosphoglycerate + ATP = (2R)-3-phospho-glyceroyl phosphate + ADP. It functions in the pathway carbohydrate degradation; glycolysis; pyruvate from D-glyceraldehyde 3-phosphate: step 2/5. The sequence is that of Phosphoglycerate kinase from Caldanaerobacter subterraneus subsp. tengcongensis (strain DSM 15242 / JCM 11007 / NBRC 100824 / MB4) (Thermoanaerobacter tengcongensis).